A 148-amino-acid polypeptide reads, in one-letter code: Transcription antitermination protein NusB (148 aa).

It belongs to the NusB family.

Its function is as follows. Involved in transcription antitermination. Required for transcription of ribosomal RNA (rRNA) genes. Binds specifically to the boxA antiterminator sequence of the ribosomal RNA (rrn) operons. The chain is Transcription antitermination protein NusB from Saccharopolyspora erythraea (strain ATCC 11635 / DSM 40517 / JCM 4748 / NBRC 13426 / NCIMB 8594 / NRRL 2338).